Consider the following 106-residue polypeptide: Neisseria hypothetical transcription factor (106 aa).

The HTH cro/C1-type domain maps to 26-80; that stretch reads MRLFRVNKGWSQEELARQCGLDRTYVSAVERKRWNIALSNIEKMAAALGVAAYQL. The H-T-H motif DNA-binding region spans 37 to 56; the sequence is QEELARQCGLDRTYVSAVER.

In terms of assembly, homodimer. Can interact with the dimeric form of the DNA mimic protein DMP19 with 1:1 stoichiometry.

It localises to the cytoplasm. With respect to regulation, repressor activity is inhibited in the presence of the DNA mimic protein DMP19, which interacts with NHTF and prevents binding of NHTF to its DNA-binding sites. Its function is as follows. Transcriptional regulator probably involved in the response to nitrogen levels. Down-regulates its own expression as well as the expression of the downstream gene, glnD, which encodes the [Protein-PII] uridylyltransferase, a key enzyme in the nitrogen regulation system. Acts by binding to a specific palindromic DNA sequence (5'-TGTNANTNACA-3') in its 5'-untranslated region. The protein is Neisseria hypothetical transcription factor of Neisseria meningitidis serogroup B (strain ATCC BAA-335 / MC58).